Here is a 256-residue protein sequence, read N- to C-terminus: Diaminopimelate epimerase (256 aa).

Positions 11 and 63 each coordinate substrate. Cysteine 72 (proton donor) is an active-site residue. Substrate contacts are provided by residues 73 to 74, asparagine 169, and 187 to 188; these read GN and ER. The Proton acceptor role is filled by cysteine 197. Substrate is bound at residue 198-199; it reads GT.

Belongs to the diaminopimelate epimerase family. In terms of assembly, homodimer.

The protein localises to the cytoplasm. The catalysed reaction is (2S,6S)-2,6-diaminopimelate = meso-2,6-diaminopimelate. The protein operates within amino-acid biosynthesis; L-lysine biosynthesis via DAP pathway; DL-2,6-diaminopimelate from LL-2,6-diaminopimelate: step 1/1. In terms of biological role, catalyzes the stereoinversion of LL-2,6-diaminopimelate (L,L-DAP) to meso-diaminopimelate (meso-DAP), a precursor of L-lysine and an essential component of the bacterial peptidoglycan. The protein is Diaminopimelate epimerase of Flavobacterium psychrophilum (strain ATCC 49511 / DSM 21280 / CIP 103535 / JIP02/86).